The sequence spans 545 residues: DNA mismatch repair protein MutL (545 aa).

The tract at residues 517-545 is disordered; it reads RRSGARGGGEARPRPQEESFPEAPLPREP.

It belongs to the DNA mismatch repair MutL/HexB family.

Its function is as follows. This protein is involved in the repair of mismatches in DNA. It is required for dam-dependent methyl-directed DNA mismatch repair. May act as a 'molecular matchmaker', a protein that promotes the formation of a stable complex between two or more DNA-binding proteins in an ATP-dependent manner without itself being part of a final effector complex. This Thermus thermophilus (strain ATCC 27634 / DSM 579 / HB8) protein is DNA mismatch repair protein MutL.